We begin with the raw amino-acid sequence, 238 residues long: Ribitol-5-phosphate cytidylyltransferase 2 (238 aa).

Residues 7-10 (LAGG) and 81-87 (GTDRNET) contribute to the CTP site.

This sequence belongs to the IspD/TarI cytidylyltransferase family. TarI subfamily.

It carries out the reaction D-ribitol 5-phosphate + CTP + H(+) = CDP-L-ribitol + diphosphate. Its pathway is cell wall biogenesis; poly(ribitol phosphate) teichoic acid biosynthesis. Its function is as follows. Catalyzes the transfer of the cytidylyl group of CTP to D-ribitol 5-phosphate. The chain is Ribitol-5-phosphate cytidylyltransferase 2 from Staphylococcus aureus (strain MRSA252).